Consider the following 136-residue polypeptide: uncharacterized protein (136 aa).

The protein to E.coli YcgX and YdfO.

This is an uncharacterized protein from Escherichia coli (strain K12).